The sequence spans 240 residues: 1-(5-phosphoribosyl)-5-[(5-phosphoribosylamino)methylideneamino] imidazole-4-carboxamide isomerase (240 aa).

The active-site Proton acceptor is the aspartate 8. Aspartate 129 acts as the Proton donor in catalysis.

It belongs to the HisA/HisF family.

The protein resides in the cytoplasm. The catalysed reaction is 1-(5-phospho-beta-D-ribosyl)-5-[(5-phospho-beta-D-ribosylamino)methylideneamino]imidazole-4-carboxamide = 5-[(5-phospho-1-deoxy-D-ribulos-1-ylimino)methylamino]-1-(5-phospho-beta-D-ribosyl)imidazole-4-carboxamide. Its pathway is amino-acid biosynthesis; L-histidine biosynthesis; L-histidine from 5-phospho-alpha-D-ribose 1-diphosphate: step 4/9. The sequence is that of 1-(5-phosphoribosyl)-5-[(5-phosphoribosylamino)methylideneamino] imidazole-4-carboxamide isomerase from Listeria monocytogenes serotype 4b (strain F2365).